Consider the following 658-residue polypeptide: DNA mismatch repair protein MutL (658 aa).

Over residues 114-130 (RQEDSSHATQVKAEDGK) the composition is skewed to basic and acidic residues. The interval 114 to 137 (RQEDSSHATQVKAEDGKLSSPTAA) is disordered.

The protein belongs to the DNA mismatch repair MutL/HexB family.

This protein is involved in the repair of mismatches in DNA. It is required for dam-dependent methyl-directed DNA mismatch repair. May act as a 'molecular matchmaker', a protein that promotes the formation of a stable complex between two or more DNA-binding proteins in an ATP-dependent manner without itself being part of a final effector complex. The protein is DNA mismatch repair protein MutL of Neisseria meningitidis serogroup C / serotype 2a (strain ATCC 700532 / DSM 15464 / FAM18).